Reading from the N-terminus, the 660-residue chain is Bifunctional polymyxin resistance protein ArnA (660 aa).

Residues 1–304 (MKTVVFAYHD…TLGLVQGSRL (304 aa)) form a formyltransferase ArnAFT region. 86 to 88 (HLI) serves as a coordination point for (6R)-10-formyltetrahydrofolate. Histidine 104 serves as the catalytic Proton donor; for formyltransferase activity. Residues arginine 114 and 136–140 (VKRAD) contribute to the (6R)-10-formyltetrahydrofolate site. Residues 314 to 660 (RRTRVLILGV…RTVDLTDKPS (347 aa)) are dehydrogenase ArnADH. Residues aspartate 347 and 368–369 (DI) contribute to the NAD(+) site. UDP-alpha-D-glucuronate is bound by residues alanine 393, tyrosine 398, and 432-433 (TS). The active-site Proton acceptor; for decarboxylase activity is the glutamate 434. UDP-alpha-D-glucuronate contacts are provided by residues arginine 460, asparagine 492, 526–535 (KLIDGGKQKR), and tyrosine 613. Catalysis depends on arginine 619, which acts as the Proton donor; for decarboxylase activity.

This sequence in the N-terminal section; belongs to the Fmt family. UDP-L-Ara4N formyltransferase subfamily. The protein in the C-terminal section; belongs to the NAD(P)-dependent epimerase/dehydratase family. UDP-glucuronic acid decarboxylase subfamily. In terms of assembly, homohexamer, formed by a dimer of trimers.

The catalysed reaction is UDP-alpha-D-glucuronate + NAD(+) = UDP-beta-L-threo-pentopyranos-4-ulose + CO2 + NADH. The enzyme catalyses UDP-4-amino-4-deoxy-beta-L-arabinose + (6R)-10-formyltetrahydrofolate = UDP-4-deoxy-4-formamido-beta-L-arabinose + (6S)-5,6,7,8-tetrahydrofolate + H(+). It functions in the pathway nucleotide-sugar biosynthesis; UDP-4-deoxy-4-formamido-beta-L-arabinose biosynthesis; UDP-4-deoxy-4-formamido-beta-L-arabinose from UDP-alpha-D-glucuronate: step 1/3. Its pathway is nucleotide-sugar biosynthesis; UDP-4-deoxy-4-formamido-beta-L-arabinose biosynthesis; UDP-4-deoxy-4-formamido-beta-L-arabinose from UDP-alpha-D-glucuronate: step 3/3. The protein operates within bacterial outer membrane biogenesis; lipopolysaccharide biosynthesis. Its function is as follows. Bifunctional enzyme that catalyzes the oxidative decarboxylation of UDP-glucuronic acid (UDP-GlcUA) to UDP-4-keto-arabinose (UDP-Ara4O) and the addition of a formyl group to UDP-4-amino-4-deoxy-L-arabinose (UDP-L-Ara4N) to form UDP-L-4-formamido-arabinose (UDP-L-Ara4FN). The modified arabinose is attached to lipid A and is required for resistance to polymyxin and cationic antimicrobial peptides. This chain is Bifunctional polymyxin resistance protein ArnA, found in Escherichia coli O157:H7.